Here is a 265-residue protein sequence, read N- to C-terminus: Glycosylphosphatidylinositol anchor biosynthesis protein 11 (265 aa).

2 consecutive transmembrane segments (helical) span residues 49-69 (LLVV…SGLT) and 79-99 (GFLT…INLL). N-linked (GlcNAc...) asparagine glycans are attached at residues asparagine 111 and asparagine 112. 4 helical membrane passes run 137–157 (IFVS…MGAP), 166–186 (LYLS…LSNL), 209–229 (ILSS…PIPL), and 240–260 (ITLL…SLIV).

It belongs to the PIGF family.

It localises to the endoplasmic reticulum membrane. Its pathway is glycolipid biosynthesis; glycosylphosphatidylinositol-anchor biosynthesis. Functionally, acts in the GPI biosynthetic pathway between GlcNAc-PI synthesis and GPI transfer to protein. The chain is Glycosylphosphatidylinositol anchor biosynthesis protein 11 (GPI11) from Candida albicans (strain SC5314 / ATCC MYA-2876) (Yeast).